The sequence spans 75 residues: Mating pheromone Er-10 (75 aa).

Residues 1–19 (MNKLAILAIIAMVLFSANA) form the signal peptide. The propeptide occupies 20–37 (FRFQSRIRSNVEAKTETR). Cystine bridges form between cysteine 40–cysteine 56, cysteine 47–cysteine 74, and cysteine 52–cysteine 64.

In terms of assembly, homodimer.

Its subcellular location is the secreted. In terms of biological role, mating ciliate pheromones (or gamones) are diffusible extracellular communication signals that distinguish different intraspecific classes of cells commonly referred to as 'mating types'. They prepare the latter for conjugation by changing their cell surface properties. This Euplotes raikovi protein is Mating pheromone Er-10 (MAT10).